A 125-amino-acid polypeptide reads, in one-letter code: Small ribosomal subunit protein uS13 (125 aa).

The interval 92 to 125 (RRSLPVRGQNTQTNARTRKGKRKTVAGKKKAARK) is disordered. A compositionally biased stretch (basic residues) spans 107 to 125 (RTRKGKRKTVAGKKKAARK).

The protein belongs to the universal ribosomal protein uS13 family. As to quaternary structure, part of the 30S ribosomal subunit. Forms a loose heterodimer with protein S19. Forms two bridges to the 50S subunit in the 70S ribosome.

Functionally, located at the top of the head of the 30S subunit, it contacts several helices of the 16S rRNA. In the 70S ribosome it contacts the 23S rRNA (bridge B1a) and protein L5 of the 50S subunit (bridge B1b), connecting the 2 subunits; these bridges are implicated in subunit movement. Contacts the tRNAs in the A and P-sites. The chain is Small ribosomal subunit protein uS13 from Chlorobium luteolum (strain DSM 273 / BCRC 81028 / 2530) (Pelodictyon luteolum).